We begin with the raw amino-acid sequence, 82 residues long: RNA-binding protein GWCH70_0105 (82 aa).

It belongs to the eukaryotic ribosomal protein eL8 family.

The chain is RNA-binding protein GWCH70_0105 from Geobacillus sp. (strain WCH70).